A 478-amino-acid polypeptide reads, in one-letter code: Putative UDP-glucose flavonoid 3-O-glucosyltransferase 3 (478 aa).

This sequence belongs to the UDP-glycosyltransferase family.

The polypeptide is Putative UDP-glucose flavonoid 3-O-glucosyltransferase 3 (Fragaria ananassa (Strawberry)).